The following is a 635-amino-acid chain: Arabinoxylan arabinofuranohydrolase (635 aa).

The first 26 residues, 1–26 (MIRKCLVLFLSFALLLSVFPMLNVDA), serve as a signal peptide directing secretion. Catalysis depends on aspartate 49, which acts as the Proton acceptor. The active-site Proton donor is the glutamate 248. Asparagine 311 lines the substrate pocket. 2 consecutive CBM6 domains span residues 379-508 (TRVE…WQFT) and 517-634 (TKVE…IEFS). 13 residues coordinate Ca(2+): glutamate 382, glutamate 384, asparagine 406, leucine 407, aspartate 503, glutamate 520, glutamate 522, aspartate 539, tyrosine 544, aspartate 620, tryptophan 624, aspartate 625, and aspartate 629.

This sequence belongs to the glycosyl hydrolase 43 family.

It localises to the secreted. It catalyses the reaction Hydrolysis of terminal non-reducing alpha-L-arabinofuranoside residues in alpha-L-arabinosides.. It functions in the pathway glycan degradation; xylan degradation. Activated by calcium and magnesium. Inhibited by copper. Functionally, cleaves arabinose units from O-2- or O-3-monosubstituted xylose residues, thereby assisting in arabinoxylan (AX) and short-chain arabinoxylo-oligosaccharide (AXOS) degradation. Preferres wheat flour xylan over oat spelt xylan as substrate. Does not display endoxylanase activity. The chain is Arabinoxylan arabinofuranohydrolase (xynD) from Paenibacillus polymyxa (Bacillus polymyxa).